The chain runs to 318 residues: Nodulation protein D 2 (318 aa).

The region spanning 6–63 (LDLNLLVALDALTTERNLTAAARSINLSQPAMSAAIGRLRDYFRDELFTMNGRELRLT) is the HTH lysR-type domain. Positions 23 to 42 (LTAAARSINLSQPAMSAAIG) form a DNA-binding region, H-T-H motif.

It belongs to the LysR transcriptional regulatory family.

Its function is as follows. NodD regulates the expression of the nodABCFE genes which encode other nodulation proteins. NodD is also a negative regulator of its own expression. Binds flavonoids as inducers. The sequence is that of Nodulation protein D 2 (nodD2) from Rhizobium leguminosarum bv. phaseoli.